Consider the following 330-residue polypeptide: uncharacterized protein (330 aa).

125-132 (GPPGCGKT) serves as a coordination point for ATP.

It belongs to the AAA ATPase family.

This is an uncharacterized protein from Sinorhizobium fredii (strain NBRC 101917 / NGR234).